The primary structure comprises 279 residues: Tryptophan synthase alpha chain (279 aa).

Catalysis depends on proton acceptor residues E50 and D61.

This sequence belongs to the TrpA family. As to quaternary structure, tetramer of two alpha and two beta chains.

It catalyses the reaction (1S,2R)-1-C-(indol-3-yl)glycerol 3-phosphate + L-serine = D-glyceraldehyde 3-phosphate + L-tryptophan + H2O. It functions in the pathway amino-acid biosynthesis; L-tryptophan biosynthesis; L-tryptophan from chorismate: step 5/5. In terms of biological role, the alpha subunit is responsible for the aldol cleavage of indoleglycerol phosphate to indole and glyceraldehyde 3-phosphate. This Allorhizobium ampelinum (strain ATCC BAA-846 / DSM 112012 / S4) (Agrobacterium vitis (strain S4)) protein is Tryptophan synthase alpha chain.